A 478-amino-acid polypeptide reads, in one-letter code: Sulfate adenylyltransferase subunit 1 (478 aa).

The tr-type G domain occupies 28–244; the sequence is KTMLRFLTCG…LESVDVVNAR (217 aa). Positions 37-44 are G1; the sequence is GSVDDGKS. Position 37-44 (37-44) interacts with GTP; that stretch reads GSVDDGKS. The segment at 95–99 is G2; the sequence is GITID. Positions 116-119 are G3; it reads DTPG. Residues 116–120 and 171–174 contribute to the GTP site; these read DTPGH and NKMD. Positions 171–174 are G4; it reads NKMD. The tract at residues 209-211 is G5; the sequence is SAL.

It belongs to the TRAFAC class translation factor GTPase superfamily. Classic translation factor GTPase family. CysN/NodQ subfamily. As to quaternary structure, heterodimer composed of CysD, the smaller subunit, and CysN.

It carries out the reaction sulfate + ATP + H(+) = adenosine 5'-phosphosulfate + diphosphate. It functions in the pathway sulfur metabolism; hydrogen sulfide biosynthesis; sulfite from sulfate: step 1/3. Its function is as follows. With CysD forms the ATP sulfurylase (ATPS) that catalyzes the adenylation of sulfate producing adenosine 5'-phosphosulfate (APS) and diphosphate, the first enzymatic step in sulfur assimilation pathway. APS synthesis involves the formation of a high-energy phosphoric-sulfuric acid anhydride bond driven by GTP hydrolysis by CysN coupled to ATP hydrolysis by CysD. The sequence is that of Sulfate adenylyltransferase subunit 1 from Yersinia pseudotuberculosis serotype O:1b (strain IP 31758).